The primary structure comprises 122 residues: Large ribosomal subunit protein uL14 (122 aa).

The protein belongs to the universal ribosomal protein uL14 family. Part of the 50S ribosomal subunit. Forms a cluster with proteins L3 and L19. In the 70S ribosome, L14 and L19 interact and together make contacts with the 16S rRNA in bridges B5 and B8.

In terms of biological role, binds to 23S rRNA. Forms part of two intersubunit bridges in the 70S ribosome. The protein is Large ribosomal subunit protein uL14 of Ruegeria pomeroyi (strain ATCC 700808 / DSM 15171 / DSS-3) (Silicibacter pomeroyi).